The following is a 393-amino-acid chain: S-adenosylmethionine synthase 2 (393 aa).

Glu9 contributes to the Mg(2+) binding site. An ATP-binding site is contributed by His15. Glu43 lines the K(+) pocket. L-methionine contacts are provided by Glu56 and Gln99. ATP-binding positions include 167–169 (DGK), 235–238 (SGRF), Asp246, 252–253 (RM), Ala269, Lys273, and Lys277. Asp246 contacts L-methionine. Lys277 is a binding site for L-methionine.

This sequence belongs to the AdoMet synthase family. As to quaternary structure, homotetramer. Requires Mn(2+) as cofactor. The cofactor is Mg(2+). It depends on Co(2+) as a cofactor. K(+) serves as cofactor.

Its subcellular location is the cytoplasm. The catalysed reaction is L-methionine + ATP + H2O = S-adenosyl-L-methionine + phosphate + diphosphate. It functions in the pathway amino-acid biosynthesis; S-adenosyl-L-methionine biosynthesis; S-adenosyl-L-methionine from L-methionine: step 1/1. Functionally, catalyzes the formation of S-adenosylmethionine from methionine and ATP. The reaction comprises two steps that are both catalyzed by the same enzyme: formation of S-adenosylmethionine (AdoMet) and triphosphate, and subsequent hydrolysis of the triphosphate. The polypeptide is S-adenosylmethionine synthase 2 (SAMS2) (Daucus carota (Wild carrot)).